We begin with the raw amino-acid sequence, 146 residues long: Small ribosomal subunit protein uS9x (146 aa).

It belongs to the universal ribosomal protein uS9 family.

It localises to the cytoplasm. The chain is Small ribosomal subunit protein uS9x (RPS16C) from Arabidopsis thaliana (Mouse-ear cress).